The following is a 223-amino-acid chain: ATP-dependent Clp protease proteolytic subunit 2 (223 aa).

Residues 1–40 (MHAGSGNDMDITRMTPTRLDDEPDAPEPETREDDNKTLNS) form a disordered region. Over residues 21 to 32 (DEPDAPEPETRE) the composition is skewed to acidic residues. S124 serves as the catalytic Nucleophile. H149 is a catalytic residue.

It belongs to the peptidase S14 family. In terms of assembly, fourteen ClpP subunits assemble into 2 heptameric rings which stack back to back to give a disk-like structure with a central cavity, resembling the structure of eukaryotic proteasomes.

The protein localises to the cytoplasm. It carries out the reaction Hydrolysis of proteins to small peptides in the presence of ATP and magnesium. alpha-casein is the usual test substrate. In the absence of ATP, only oligopeptides shorter than five residues are hydrolyzed (such as succinyl-Leu-Tyr-|-NHMec, and Leu-Tyr-Leu-|-Tyr-Trp, in which cleavage of the -Tyr-|-Leu- and -Tyr-|-Trp bonds also occurs).. Functionally, cleaves peptides in various proteins in a process that requires ATP hydrolysis. Has a chymotrypsin-like activity. Plays a major role in the degradation of misfolded proteins. The sequence is that of ATP-dependent Clp protease proteolytic subunit 2 from Gluconobacter oxydans (strain 621H) (Gluconobacter suboxydans).